Reading from the N-terminus, the 546-residue chain is MTYGGRDQQYNKTNYKSRGGDFRGGRNSDRNSYNDRPQGGNYRGGFGGRSNYNQPQELIKPNWDEELPKLPTFEKNFYVEHESVRDRSDSEIAQFRKENEMTISGHDIPKPITTFDEAGFPDYVLNEVKAEGFDKPTGIQCQGWPMALSGRDMVGIAATGSGKTLSYCLPGIVHINAQPLLAPGDGPIVLVLAPTRELAVQIQTECSKFGHSSRIRNTCVYGGVPKSQQIRDLSRGSEIVIATPGRLIDMLEIGKTNLKRVTYLVLDEADRMLDMGFEPQIRKIVDQIRPDRQTLMWSATWPKEVKQLAADYLNDPIQVQVGSLELSASHNITQIVEVVSDFEKRDRLNKYLETASQDNEYKTLIFASTKRMCDDITKYLREDGWPALAIHGDKDQRERDWVLQEFRNGRSPIMVATDVAARGIDVKGINYVINYDMPGNIEDYVHRIGRTGRAGATGTAISFFTEQNKGLGAKLISIMREANQNIPPELLKYDRRSYGGGHPRYGGGRGGRGGYGRRGGYGGGRGGYGGNRQRDGGWGNRGRSNY.

Residues 1-56 (MTYGGRDQQYNKTNYKSRGGDFRGGRNSDRNSYNDRPQGGNYRGGFGGRSNYNQPQ) form a disordered region. An omega-N-methylarginine mark is found at arginine 18 and arginine 43. Residues 18–33 (RGGDFRGGRNSDRNSY) show a composition bias toward basic and acidic residues. Phosphoserine occurs at positions 88 and 90. The Q motif signature appears at 113 to 141 (TTFDEAGFPDYVLNEVKAEGFDKPTGIQC). A Helicase ATP-binding domain is found at 144–319 (WPMALSGRDM…ADYLNDPIQV (176 aa)). 157-164 (AATGSGKT) lines the ATP pocket. The DEAD box motif lies at 267–270 (DEAD). Residues 347–494 (RLNKYLETAS…NIPPELLKYD (148 aa)) enclose the Helicase C-terminal domain. Residue lysine 474 forms a Glycyl lysine isopeptide (Lys-Gly) (interchain with G-Cter in ubiquitin) linkage. A disordered region spans residues 493 to 546 (YDRRSYGGGHPRYGGGRGGRGGYGRRGGYGGGRGGYGGNRQRDGGWGNRGRSNY). The span at 498–540 (YGGGHPRYGGGRGGRGGYGRRGGYGGGRGGYGGNRQRDGGWGN) shows a compositional bias: gly residues. The tract at residues 505-530 (YGGGRGGRGGYGRRGGYGGGRGGYGG) is RNA-binding RGG-box. Arginine 509, arginine 512, arginine 518, and arginine 525 each carry dimethylated arginine; alternate. 4 positions are modified to omega-N-methylarginine; alternate: arginine 509, arginine 512, arginine 518, and arginine 525.

The protein belongs to the DEAD box helicase family. DDX5/DBP2 subfamily. In terms of assembly, interacts with UPF1. Associates with polysomes.

It is found in the cytoplasm. It localises to the nucleus. The catalysed reaction is ATP + H2O = ADP + phosphate + H(+). Functionally, ATP-dependent RNA helicase involved nonsense-mediated mRNA decay and ribosome biogenesis through rRNA processing. Associates directly with chromatin, correlating with transcriptional activity. Required for assembly of mRNA-binding proteins YRA1, NAB2, and MEX67 onto poly(A)+ RNA. The chain is ATP-dependent RNA helicase DBP2 from Saccharomyces cerevisiae (strain ATCC 204508 / S288c) (Baker's yeast).